The chain runs to 296 residues: Ribosomal RNA small subunit methyltransferase A (296 aa).

S-adenosyl-L-methionine contacts are provided by Asn-31, Leu-33, Gly-58, Glu-79, Asp-111, and Asn-136.

This sequence belongs to the class I-like SAM-binding methyltransferase superfamily. rRNA adenine N(6)-methyltransferase family. RsmA subfamily.

It localises to the cytoplasm. The catalysed reaction is adenosine(1518)/adenosine(1519) in 16S rRNA + 4 S-adenosyl-L-methionine = N(6)-dimethyladenosine(1518)/N(6)-dimethyladenosine(1519) in 16S rRNA + 4 S-adenosyl-L-homocysteine + 4 H(+). In terms of biological role, specifically dimethylates two adjacent adenosines (A1518 and A1519) in the loop of a conserved hairpin near the 3'-end of 16S rRNA in the 30S particle. May play a critical role in biogenesis of 30S subunits. In Lactobacillus delbrueckii subsp. bulgaricus (strain ATCC BAA-365 / Lb-18), this protein is Ribosomal RNA small subunit methyltransferase A.